The primary structure comprises 144 residues: Large ribosomal subunit protein bL31c (144 aa).

The N-terminal 48 residues, 1–48 (MAVSLPNSFLQISPCVPSLQLRKPVMAAVKGGKQSVRRSSNTVVQITC), are a transit peptide targeting the chloroplast.

It belongs to the bacterial ribosomal protein bL31 family. Type A subfamily. As to quaternary structure, part of the 50S ribosomal subunit.

It is found in the plastid. The protein resides in the chloroplast. Binds the 23S rRNA. In Arabidopsis thaliana (Mouse-ear cress), this protein is Large ribosomal subunit protein bL31c (RPL31).